The primary structure comprises 314 residues: 2-methoxy-6-polyprenyl-1,4-benzoquinol methylase, mitochondrial (314 aa).

The N-terminal 19 residues, methionine 1–arginine 19, are a transit peptide targeting the mitochondrion. S-adenosyl-L-methionine contacts are provided by residues threonine 109, aspartate 154, asparagine 186–serine 187, and serine 203.

The protein belongs to the class I-like SAM-binding methyltransferase superfamily. MenG/UbiE family. Component of a multi-subunit COQ enzyme complex.

The protein resides in the mitochondrion inner membrane. The catalysed reaction is a 2-methoxy-6-(all-trans-polyprenyl)benzene-1,4-diol + S-adenosyl-L-methionine = a 5-methoxy-2-methyl-3-(all-trans-polyprenyl)benzene-1,4-diol + S-adenosyl-L-homocysteine + H(+). It functions in the pathway cofactor biosynthesis; ubiquinone biosynthesis. Methyltransferase required for the conversion of 2-polyprenyl-6-methoxy-1,4-benzoquinol (DDMQH2) to 2-polyprenyl-3-methyl-6-methoxy-1,4-benzoquinol (DMQH2). This Dictyostelium discoideum (Social amoeba) protein is 2-methoxy-6-polyprenyl-1,4-benzoquinol methylase, mitochondrial.